A 270-amino-acid chain; its full sequence is Nodule lectin (270 aa).

A signal peptide spans 1-33 (MAFYRTNLPTRELFSLVSVVIVLLATNINSVQA). Residues 34–41 (LSFNFTKL) constitute a propeptide that is removed on maturation. An N-linked (GlcNAc...) asparagine glycan is attached at Asn-134.

The protein belongs to the leguminous lectin family. Glycosylated in a boron-dependent manner. Glycosylation is required for localization to symbiosomes. 3 different glycosylation variants, NLEC-1A, NLEC-1B and NLEC-1C, have been identified. As to expression, expressed in nodules of Rhizobium-infected and uninfected roots and in the root stele near the nodule attachment point. In roots which have been colonized by the endomycorrhizal fungus G.versiforme, detected only in cortical cells colonized by the fungus, mainly those containing arbuscules.

The protein localises to the symbiosome. The protein resides in the peribacteroid space. It localises to the peribacteroid membrane. Its function is as follows. Involved in symbiosome development. This Pisum sativum (Garden pea) protein is Nodule lectin (NLEC1).